The sequence spans 316 residues: MPTFNGSVFMPSAFILIGIPGLESVQCWIGIPFSAMYLIGVIGNSLILVIIKYENSLHIPMYIFLAMLAATDIALNTCILPKMLGIFWFHLPEISFDACLFQMWLIHSFQAIESGILLAMALDRYVAICIPLRHATIFSQQFLTHIGLGVTLRAAILIIPSLGLIKCCLKHYRTTVISHSYCEHMAIVKLATEDIRVNKIYGLFVAFAILGFDIIFITLSYVQIFITVFQLPQKEARFKAFNTCIAHICVFLQFYLLAFFSFFTHRFGSHIPPYIHILLSNLYLLVPPFLNPIVYGVKTKQIRDHIVKVFFFKKVT.

Over 1-27 (MPTFNGSVFMPSAFILIGIPGLESVQC) the chain is Extracellular. Asparagine 5 is a glycosylation site (N-linked (GlcNAc...) asparagine). The helical transmembrane segment at 28–48 (WIGIPFSAMYLIGVIGNSLIL) threads the bilayer. The Cytoplasmic portion of the chain corresponds to 49-56 (VIIKYENS). A helical membrane pass occupies residues 57-77 (LHIPMYIFLAMLAATDIALNT). At 78-101 (CILPKMLGIFWFHLPEISFDACLF) the chain is on the extracellular side. A helical transmembrane segment spans residues 102–122 (QMWLIHSFQAIESGILLAMAL). At 123–141 (DRYVAICIPLRHATIFSQQ) the chain is on the cytoplasmic side. A helical membrane pass occupies residues 142-162 (FLTHIGLGVTLRAAILIIPSL). The Extracellular portion of the chain corresponds to 163–199 (GLIKCCLKHYRTTVISHSYCEHMAIVKLATEDIRVNK). Residues 200 to 220 (IYGLFVAFAILGFDIIFITLS) form a helical membrane-spanning segment. The Cytoplasmic portion of the chain corresponds to 221 to 240 (YVQIFITVFQLPQKEARFKA). The helical transmembrane segment at 241–261 (FNTCIAHICVFLQFYLLAFFS) threads the bilayer. Residues 262 to 276 (FFTHRFGSHIPPYIH) are Extracellular-facing. Residues 277-297 (ILLSNLYLLVPPFLNPIVYGV) traverse the membrane as a helical segment. The Cytoplasmic segment spans residues 298 to 316 (KTKQIRDHIVKVFFFKKVT).

The protein belongs to the G-protein coupled receptor 1 family.

It is found in the cell membrane. Odorant receptor. This chain is Olfactory receptor 52A5 (OR52A5), found in Homo sapiens (Human).